A 347-amino-acid polypeptide reads, in one-letter code: Dual-specificity RNA methyltransferase RlmN (347 aa).

Glutamate 93 (proton acceptor) is an active-site residue. The region spanning aspartate 99–aspartate 327 is the Radical SAM core domain. A disulfide bond links cysteine 106 and cysteine 332. Residues cysteine 113, cysteine 117, and cysteine 120 each coordinate [4Fe-4S] cluster. S-adenosyl-L-methionine contacts are provided by residues glycine 158–glutamate 159, serine 190, serine 213–asparagine 215, and asparagine 289. Cysteine 332 serves as the catalytic S-methylcysteine intermediate.

This sequence belongs to the radical SAM superfamily. RlmN family. [4Fe-4S] cluster is required as a cofactor.

It localises to the cytoplasm. It catalyses the reaction adenosine(2503) in 23S rRNA + 2 reduced [2Fe-2S]-[ferredoxin] + 2 S-adenosyl-L-methionine = 2-methyladenosine(2503) in 23S rRNA + 5'-deoxyadenosine + L-methionine + 2 oxidized [2Fe-2S]-[ferredoxin] + S-adenosyl-L-homocysteine. The catalysed reaction is adenosine(37) in tRNA + 2 reduced [2Fe-2S]-[ferredoxin] + 2 S-adenosyl-L-methionine = 2-methyladenosine(37) in tRNA + 5'-deoxyadenosine + L-methionine + 2 oxidized [2Fe-2S]-[ferredoxin] + S-adenosyl-L-homocysteine. Functionally, specifically methylates position 2 of adenine 2503 in 23S rRNA and position 2 of adenine 37 in tRNAs. m2A2503 modification seems to play a crucial role in the proofreading step occurring at the peptidyl transferase center and thus would serve to optimize ribosomal fidelity. The chain is Dual-specificity RNA methyltransferase RlmN from Pelobacter propionicus (strain DSM 2379 / NBRC 103807 / OttBd1).